The sequence spans 489 residues: N-succinylglutamate 5-semialdehyde dehydrogenase 1 (489 aa).

223 to 228 (GSSRTG) provides a ligand contact to NAD(+). Residues E246 and C280 contribute to the active site.

Belongs to the aldehyde dehydrogenase family. AstD subfamily.

It carries out the reaction N-succinyl-L-glutamate 5-semialdehyde + NAD(+) + H2O = N-succinyl-L-glutamate + NADH + 2 H(+). Its pathway is amino-acid degradation; L-arginine degradation via AST pathway; L-glutamate and succinate from L-arginine: step 4/5. Catalyzes the NAD-dependent reduction of succinylglutamate semialdehyde into succinylglutamate. The polypeptide is N-succinylglutamate 5-semialdehyde dehydrogenase 1 (Pseudoalteromonas translucida (strain TAC 125)).